Here is a 136-residue protein sequence, read N- to C-terminus: NHL-repeat-containing protein 4 (136 aa).

NHL repeat units follow at residues 48–91 (QPLG…FPRV) and 93–132 (PPICLQLEGLKRPLGMACAPQGQLVVADAGDNCIKLYQYL).

The sequence is that of NHL-repeat-containing protein 4 (Nhlrc4) from Mus musculus (Mouse).